A 205-amino-acid polypeptide reads, in one-letter code: MSASPSPSITGLLLAGGRATRMDGADKGLQLLDGTPLALHVLRRLSPQVDETLISANRNADRYAELGAPFDARIVADETADFPGPLAGLLAGMRAARAPLVACAPCDTPYLPADVVARLHAALDAQQADIAMAVTVDAQHARSPQPTFALLRTSLADDLAAALAAGERKVRAWYARHKTVEVEFRDERAFYNANSWHELAALARR.

GTP is bound by residues 14–16, Lys-27, Asp-77, and Asp-107; that span reads LAG. Position 107 (Asp-107) interacts with Mg(2+).

Belongs to the MobA family. As to quaternary structure, monomer. Mg(2+) serves as cofactor.

The protein resides in the cytoplasm. The catalysed reaction is Mo-molybdopterin + GTP + H(+) = Mo-molybdopterin guanine dinucleotide + diphosphate. In terms of biological role, transfers a GMP moiety from GTP to Mo-molybdopterin (Mo-MPT) cofactor (Moco or molybdenum cofactor) to form Mo-molybdopterin guanine dinucleotide (Mo-MGD) cofactor. This Burkholderia ambifaria (strain ATCC BAA-244 / DSM 16087 / CCUG 44356 / LMG 19182 / AMMD) (Burkholderia cepacia (strain AMMD)) protein is Molybdenum cofactor guanylyltransferase.